The chain runs to 738 residues: Cleavage and polyadenylation specificity factor subunit 2 (738 aa).

This sequence belongs to the metallo-beta-lactamase superfamily. RNA-metabolizing metallo-beta-lactamase-like family. CPSF2/YSH1 subfamily. In terms of assembly, CPSF is a heterotetramer composed of four distinct subunits 160, 100, 70 and 30 kDa.

Its subcellular location is the nucleus. Its function is as follows. CPSF plays a key role in pre-mRNA 3'-end formation, recognizing the AAUAAA signal sequence and interacting with poly(A)polymerase and other factors to bring about cleavage and poly(A) addition. This is Cleavage and polyadenylation specificity factor subunit 2 from Oryza sativa subsp. japonica (Rice).